The following is a 132-amino-acid chain: Large ribosomal subunit protein uL24 (132 aa).

This sequence belongs to the universal ribosomal protein uL24 family. As to quaternary structure, part of the 50S ribosomal subunit.

One of two assembly initiator proteins, it binds directly to the 5'-end of the 23S rRNA, where it nucleates assembly of the 50S subunit. Its function is as follows. One of the proteins that surrounds the polypeptide exit tunnel on the outside of the subunit. The sequence is that of Large ribosomal subunit protein uL24 from Synechococcus sp. (strain JA-2-3B'a(2-13)) (Cyanobacteria bacterium Yellowstone B-Prime).